The sequence spans 475 residues: UDP-N-acetylmuramate--L-alanine ligase (475 aa).

112–118 serves as a coordination point for ATP; that stretch reads GTHGKTT.

It belongs to the MurCDEF family.

It is found in the cytoplasm. It carries out the reaction UDP-N-acetyl-alpha-D-muramate + L-alanine + ATP = UDP-N-acetyl-alpha-D-muramoyl-L-alanine + ADP + phosphate + H(+). Its pathway is cell wall biogenesis; peptidoglycan biosynthesis. Functionally, cell wall formation. The sequence is that of UDP-N-acetylmuramate--L-alanine ligase from Paracidovorax citrulli (strain AAC00-1) (Acidovorax citrulli).